Consider the following 215-residue polypeptide: MESSRGKPGLNGSGGGAAAFDYSSRRGYYTGAGAALPPLAAGSRAPPVDPCCVALRVFVLLGTLASAVVMAADRQSTTVQIAAGEQLAPPLRVPVTAKWTYSSAFVYFVVANAMVFAFSAAALAAVRRRSAVVPVMVGDLVAMALLFSAVGAAAQFGLLGERGNAHVRWAKVCDVYGPFCERAMAAVVVALIAAFADLVLLMLTILTIHKASSYY.

The Cytoplasmic segment spans residues 1–51; it reads MESSRGKPGLNGSGGGAAAFDYSSRRGYYTGAGAALPPLAAGSRAPPVDPC. The chain crosses the membrane as a helical span at residues 52–72; it reads CVALRVFVLLGTLASAVVMAA. Residues 73 to 103 are Extracellular-facing; that stretch reads DRQSTTVQIAAGEQLAPPLRVPVTAKWTYSS. Residues 104-124 traverse the membrane as a helical segment; that stretch reads AFVYFVVANAMVFAFSAAALA. At 125 to 130 the chain is on the cytoplasmic side; sequence AVRRRS. A helical membrane pass occupies residues 131 to 151; the sequence is AVVPVMVGDLVAMALLFSAVG. The Extracellular segment spans residues 152-185; that stretch reads AAAQFGLLGERGNAHVRWAKVCDVYGPFCERAMA. A helical membrane pass occupies residues 186–206; it reads AVVVALIAAFADLVLLMLTIL. Topologically, residues 207–215 are cytoplasmic; sequence TIHKASSYY.

The protein belongs to the Casparian strip membrane proteins (CASP) family. Homodimer and heterodimers.

Its subcellular location is the cell membrane. This Oryza sativa subsp. indica (Rice) protein is CASP-like protein 1E1.